The sequence spans 417 residues: Calreticulin (417 aa).

The N-terminal stretch at 1–17 (MLLSVPLLLGLLGLAVA) is a signal peptide. Residues 18–197 (EPAVYFKEQF…NSQVESGSLE (180 aa)) are N-domain. Ca(2+) is bound at residue Gln26. Residue Lys48 is modified to N6-acetyllysine. Residues Lys62 and Lys64 each coordinate Ca(2+). N6-(2-hydroxyisobutyryl)lysine is present on Lys64. A disulfide bridge connects residues Cys105 and Cys137. An alpha-D-glucoside contacts are provided by Tyr109, Lys111, Tyr128, and Asp135. An N6-acetyllysine modification is found at Lys159. The stretch at 191–202 (VESGSLEDDWDF) is one 1-1 repeat. A 4 X approximate repeats region spans residues 191-255 (VESGSLEDDW…DAKKPEDWDE (65 aa)). The tract at residues 193–278 (SGSLEDDWDF…PEYKGEWKPR (86 aa)) is disordered. The interval 198–308 (DDWDFLPPKK…YSPDPSIYAY (111 aa)) is P-domain. Residues 207-251 (KIKDPDASKPEDWDERAKIDDPTDSKPEDWDKPEHIPDPDAKKPE) show a composition bias toward basic and acidic residues. Position 209 is an N6-acetyllysine (Lys209). Repeat copies occupy residues 210–221 (DPDASKPEDWDE), 227–238 (DPTDSKPEDWDK), 244–255 (DPDAKKPEDWDE), 259–269 (GEWEPPVIQNP), 273–283 (GEWKPRQIDNP), and 287–297 (GTWIHPEIDNP). An interaction with PPIB region spans residues 237-270 (DKPEHIPDPDAKKPEDWDEEMDGEWEPPVIQNPE). The segment covering 252–261 (DWDEEMDGEW) has biased composition (acidic residues). Residues 259-297 (GEWEPPVIQNPEYKGEWKPRQIDNPDYKGTWIHPEIDNP) are 3 X approximate repeats. Positions 309-417 (DNFGVLGLDL…DVPGQAKDEL (109 aa)) are C-domain. Residue Asp317 participates in an alpha-D-glucoside binding. Asp328 is a Ca(2+) binding site. Asn344 carries an N-linked (GlcNAc...) asparagine glycan. Residues 350 to 417 (TKAAEKQMKD…DVPGQAKDEL (68 aa)) are disordered. The span at 352–379 (AAEKQMKDKQDEEQRLKEEEEDKKRKEE) shows a compositional bias: basic and acidic residues. Positions 380–409 (EEAEDKEDDEDKDEDEEDEEDKEEDEEEDV) are enriched in acidic residues. The short motif at 414-417 (KDEL) is the Prevents secretion from ER element.

The protein belongs to the calreticulin family. In terms of assembly, monomer. Component of an EIF2 complex at least composed of CELF1/CUGBP1, CALR, CALR3, EIF2S1, EIF2S2, HSP90B1 and HSPA5. Interacts with PDIA3/ERp57 and SPACA9. Interacts with TRIM21. Interacts with NR3C1. Interacts with PPIB. Interacts (via P-domain) with PDIA5. Interacts with GABARAP. Interacts with HLA-E-B2M and HLA-G-B2M complexes. Interacts with HLA-F. Interacts with CLCC1.

Its subcellular location is the endoplasmic reticulum lumen. The protein localises to the cytoplasm. It is found in the cytosol. It localises to the secreted. The protein resides in the extracellular space. Its subcellular location is the extracellular matrix. The protein localises to the cell surface. It is found in the sarcoplasmic reticulum lumen. It localises to the cytoplasmic vesicle. The protein resides in the secretory vesicle. Its subcellular location is the cortical granule. The protein localises to the cytolytic granule. Functionally, calcium-binding chaperone that promotes folding, oligomeric assembly and quality control in the endoplasmic reticulum (ER) via the calreticulin/calnexin cycle. This lectin interacts transiently with almost all of the monoglucosylated glycoproteins that are synthesized in the ER. Interacts with the DNA-binding domain of NR3C1 and mediates its nuclear export. Involved in maternal gene expression regulation. May participate in oocyte maturation via the regulation of calcium homeostasis. Present in the cortical granules of non-activated oocytes, is exocytosed during the cortical reaction in response to oocyte activation and might participate in the block to polyspermy. This Homo sapiens (Human) protein is Calreticulin.